We begin with the raw amino-acid sequence, 325 residues long: Phosphate acyltransferase (325 aa).

It belongs to the PlsX family. As to quaternary structure, homodimer. Probably interacts with PlsY.

It is found in the cytoplasm. The enzyme catalyses a fatty acyl-[ACP] + phosphate = an acyl phosphate + holo-[ACP]. It functions in the pathway lipid metabolism; phospholipid metabolism. In terms of biological role, catalyzes the reversible formation of acyl-phosphate (acyl-PO(4)) from acyl-[acyl-carrier-protein] (acyl-ACP). This enzyme utilizes acyl-ACP as fatty acyl donor, but not acyl-CoA. This Staphylococcus epidermidis (strain ATCC 35984 / DSM 28319 / BCRC 17069 / CCUG 31568 / BM 3577 / RP62A) protein is Phosphate acyltransferase.